The following is a 705-amino-acid chain: Elongation factor G (705 aa).

One can recognise a tr-type G domain in the interval 8 to 290 (ERYRNFGIMA…GVVHLLPSPA (283 aa)). GTP is bound by residues 17–24 (AHIDAGKT), 88–92 (DTPGH), and 142–145 (NKMD). The disordered stretch occupies residues 290-309 (ADRPPVQGIDENEKEDTRDA).

This sequence belongs to the TRAFAC class translation factor GTPase superfamily. Classic translation factor GTPase family. EF-G/EF-2 subfamily.

The protein resides in the cytoplasm. Functionally, catalyzes the GTP-dependent ribosomal translocation step during translation elongation. During this step, the ribosome changes from the pre-translocational (PRE) to the post-translocational (POST) state as the newly formed A-site-bound peptidyl-tRNA and P-site-bound deacylated tRNA move to the P and E sites, respectively. Catalyzes the coordinated movement of the two tRNA molecules, the mRNA and conformational changes in the ribosome. The protein is Elongation factor G of Xanthomonas campestris pv. campestris (strain 8004).